Consider the following 777-residue polypeptide: Protein argonaute (777 aa).

The segment at 1–107 (MAPVQAADEM…ARLDDALEEA (107 aa)) is N-terminal domain. Residues 108-182 (LPKYAAVKKR…TIGMRYDIEA (75 aa)) form a linker L1 region. Residues 183-243 (SLRDLLEAGI…VNVNDAKLEG (61 aa)) form a PAZ domain region. Residues 244–341 (SKENFTRCLS…DRTGAKSAEY (98 aa)) are linker L2. The interval 342–509 (AWRGLSQFGP…SIATYAKLNG (168 aa)) is mid domain. A Piwi domain is found at 445 to 757 (GIVVLFEDHA…IAELLGRLKS (313 aa)). Positions 510–777 (TPWTVNHDKA…IKLKWSRWFL (268 aa)) are PIWI domain. Position 777 (L777) interacts with Mg(2+).

This sequence belongs to the argonaute family. Long pAgo subfamily. Mg(2+) is required as a cofactor.

Functionally, a catalytically inactive argonaute protein. Binds 5'-phosphorylated RNA as the guide (gRNA) and short DNA as target DNA (tDNA); does not bind other nucleic acid combinations, does not bind tDNA alone. Has highest affinity for gRNA that begins with 5'-phospho-U and poor affinity for gRNA with 5'-OH. Upon expression in E.coli, plasmid sequences are found in RsAgo, its induction leads to plasmid degradation and suppression of genes encoded on foreign plasmids, suggesting it may also interfere with transcription. Does not interact with preformed gRNA:tDNA duplexes. Mismatches and nt bulges are tolerated in the ternary complex, however, they significantly reduce the affinity of RsAgo:gRNA for tDNA. Mismatched tDNA can cause dissociation of gRNA from RsAgo. In situ binds 2 populations of RNA (15-19 and 45 nucleotides, nt) and a population of ssDNA 22-24 nt in length. The small sense RNA is probably derived from mRNA degradation and strongly enriched for U in the first and U/C in the second positions. The small DNA is enriched for sequences complementary to the RNA, with 3 nt overhangs on both ends; another nuclease may trim the ends. The sequences are largely derived from exogenous plasmids or genome-encoded foreign elements such as prophages and transposons. Forms a ternary complex with gRNA and double-stranded tDNA only when the tDNA is open. In Cereibacter sphaeroides (strain ATCC 17025 / ATH 2.4.3) (Rhodobacter sphaeroides), this protein is Protein argonaute.